A 182-amino-acid chain; its full sequence is Crossover junction endodeoxyribonuclease RuvC (182 aa).

Residues Asp7, Glu69, and Asp141 contribute to the active site. Mg(2+) contacts are provided by Asp7, Glu69, and Asp141.

This sequence belongs to the RuvC family. As to quaternary structure, homodimer which binds Holliday junction (HJ) DNA. The HJ becomes 2-fold symmetrical on binding to RuvC with unstacked arms; it has a different conformation from HJ DNA in complex with RuvA. In the full resolvosome a probable DNA-RuvA(4)-RuvB(12)-RuvC(2) complex forms which resolves the HJ. It depends on Mg(2+) as a cofactor.

It localises to the cytoplasm. It catalyses the reaction Endonucleolytic cleavage at a junction such as a reciprocal single-stranded crossover between two homologous DNA duplexes (Holliday junction).. In terms of biological role, the RuvA-RuvB-RuvC complex processes Holliday junction (HJ) DNA during genetic recombination and DNA repair. Endonuclease that resolves HJ intermediates. Cleaves cruciform DNA by making single-stranded nicks across the HJ at symmetrical positions within the homologous arms, yielding a 5'-phosphate and a 3'-hydroxyl group; requires a central core of homology in the junction. The consensus cleavage sequence is 5'-(A/T)TT(C/G)-3'. Cleavage occurs on the 3'-side of the TT dinucleotide at the point of strand exchange. HJ branch migration catalyzed by RuvA-RuvB allows RuvC to scan DNA until it finds its consensus sequence, where it cleaves and resolves the cruciform DNA. The protein is Crossover junction endodeoxyribonuclease RuvC of Albidiferax ferrireducens (strain ATCC BAA-621 / DSM 15236 / T118) (Rhodoferax ferrireducens).